Here is a 580-residue protein sequence, read N- to C-terminus: Glypican-3 (580 aa).

The first 24 residues, 1 to 24, serve as a signal peptide directing secretion; the sequence is MAGTVRTACLVVAMLLSLDFPGQA. Position 25 is a pyrrolidone carboxylic acid (Gln25). 7 cysteine pairs are disulfide-bonded: Cys35–Cys72, Cys65–Cys262, Cys73–Cys265, Cys197–Cys349, Cys252–Cys285, Cys274–Cys422, and Cys278–Cys410. Residues Asn124 and Asn241 are each glycosylated (N-linked (GlcNAc...) asparagine). At Ser352 the chain carries Phosphoserine. N-linked (GlcNAc...) asparagine glycosylation is present at Asn418. Ser495 and Ser509 each carry an O-linked (Xyl...) (glycosaminoglycan) serine glycan. Asn554 is lipidated: GPI-anchor amidated asparagine. Positions 555–580 are cleaved as a propeptide — removed in mature form; that stretch reads LGNVHSPLKLLTSMAISVVCFFFLVH.

It belongs to the glypican family. As to quaternary structure, heterodimer; disulfide-linked. Cleavage by a furin-like convertase results in production of alpha and beta chains which form a disulfide-linked heterodimer. Interacts with DPP4. Interacts with FGF2. Interacts with WNT5A. Also interacts with WNT3A and WNT7B. Interacts with hedgehog protein SHH; the heparan sulfate chains are not required for the interaction. Also interacts with hedgehog protein IHH. Interacts with CD81. Interacts with Wnt receptors FZD4, FZD7 and FZD8; the heparan sulfate chains are required for the interaction. Post-translationally, O-glycosylated; contains heparan sulfate and/or chondroitin sulfate. Cleaved intracellularly by a furin-like convertase to generate 2 subunits, alpha and beta, which remain associated through disulfide bonds and are associated with the cell surface via the GPI-anchor. This processing is essential for its role in inhibition of hedgehog signaling. A second proteolytic event may result in cleavage of the protein on the cell surface, separating it from the GPI-anchor and leading to its shedding from the cell surface.

The protein resides in the cell membrane. Its function is as follows. Cell surface proteoglycan. Negatively regulates the hedgehog signaling pathway when attached via the GPI-anchor to the cell surface by competing with the hedgehog receptor PTC1 for binding to hedgehog proteins. Binding to the hedgehog protein SHH triggers internalization of the complex by endocytosis and its subsequent lysosomal degradation. Positively regulates the canonical Wnt signaling pathway by binding to the Wnt receptor Frizzled and stimulating the binding of the Frizzled receptor to Wnt ligands. Positively regulates the non-canonical Wnt signaling pathway. Binds to CD81 which decreases the availability of free CD81 for binding to the transcriptional repressor HHEX, resulting in nuclear translocation of HHEX and transcriptional repression. Inhibits the dipeptidyl peptidase activity of DPP4. Plays a role in limb patterning and skeletal development by controlling the cellular response to BMP4. Modulates the effects of growth factors BMP2, BMP7 and FGF7 on renal branching morphogenesis. Required for coronary vascular development. Plays a role in regulating cell movements during gastrulation. The polypeptide is Glypican-3 (GPC3) (Pan troglodytes (Chimpanzee)).